A 322-amino-acid polypeptide reads, in one-letter code: tRNA uridine(34) hydroxylase (322 aa).

One can recognise a Rhodanese domain in the interval 125–219; it reads QDPDTIVIDA…YGKDPEVKGQ (95 aa). The active-site Cysteine persulfide intermediate is the Cys179.

The protein belongs to the TrhO family.

It carries out the reaction uridine(34) in tRNA + AH2 + O2 = 5-hydroxyuridine(34) in tRNA + A + H2O. Catalyzes oxygen-dependent 5-hydroxyuridine (ho5U) modification at position 34 in tRNAs. The chain is tRNA uridine(34) hydroxylase from Bacillus velezensis (strain DSM 23117 / BGSC 10A6 / LMG 26770 / FZB42) (Bacillus amyloliquefaciens subsp. plantarum).